Consider the following 364-residue polypeptide: Aminomethyltransferase (364 aa).

Belongs to the GcvT family. In terms of assembly, the glycine cleavage system is composed of four proteins: P, T, L and H.

The enzyme catalyses N(6)-[(R)-S(8)-aminomethyldihydrolipoyl]-L-lysyl-[protein] + (6S)-5,6,7,8-tetrahydrofolate = N(6)-[(R)-dihydrolipoyl]-L-lysyl-[protein] + (6R)-5,10-methylene-5,6,7,8-tetrahydrofolate + NH4(+). Functionally, the glycine cleavage system catalyzes the degradation of glycine. This is Aminomethyltransferase from Geobacillus kaustophilus (strain HTA426).